The chain runs to 200 residues: Lipopolysaccharide core heptose(II)-phosphate phosphatase (200 aa).

Residues 1 to 25 form the signal peptide; the sequence is MLAFCRSSLKSKKYFIILLALAAIA.

The protein belongs to the phosphoglycerate mutase family. Ais subfamily.

It is found in the periplasm. It functions in the pathway bacterial outer membrane biogenesis; lipopolysaccharide metabolism. In terms of biological role, catalyzes the dephosphorylation of heptose(II) of the outer membrane lipopolysaccharide core. In Escherichia coli O9:H4 (strain HS), this protein is Lipopolysaccharide core heptose(II)-phosphate phosphatase.